Reading from the N-terminus, the 342-residue chain is Glycerol-3-phosphate dehydrogenase [NAD(P)+] (342 aa).

Positions 11, 33, and 107 each coordinate NADPH. Sn-glycerol 3-phosphate is bound by residues Lys107, Gly143, and Ser145. An NADPH-binding site is contributed by Ala147. Residues Lys198, Asp251, Ser261, Arg262, and Asn263 each coordinate sn-glycerol 3-phosphate. Lys198 acts as the Proton acceptor in catalysis. Arg262 contributes to the NADPH binding site. NADPH-binding residues include Val286 and Glu288.

Belongs to the NAD-dependent glycerol-3-phosphate dehydrogenase family.

The protein localises to the cytoplasm. The catalysed reaction is sn-glycerol 3-phosphate + NAD(+) = dihydroxyacetone phosphate + NADH + H(+). The enzyme catalyses sn-glycerol 3-phosphate + NADP(+) = dihydroxyacetone phosphate + NADPH + H(+). The protein operates within membrane lipid metabolism; glycerophospholipid metabolism. Catalyzes the reduction of the glycolytic intermediate dihydroxyacetone phosphate (DHAP) to sn-glycerol 3-phosphate (G3P), the key precursor for phospholipid synthesis. The sequence is that of Glycerol-3-phosphate dehydrogenase [NAD(P)+] from Paracidovorax citrulli (strain AAC00-1) (Acidovorax citrulli).